The following is a 147-amino-acid chain: Transthyretin (147 aa).

A signal peptide spans 1 to 20; that stretch reads MASHRLLLLCLAGLVFVSEA. The residue at position 30 (cysteine 30) is a Sulfocysteine. Lysine 35 is an L-thyroxine binding site. Glutamate 62 is modified (4-carboxyglutamate). A Phosphoserine modification is found at serine 72. Glutamate 74 is a binding site for L-thyroxine. A glycan (N-linked (GlcNAc...) asparagine) is linked at asparagine 118. Residue serine 137 coordinates L-thyroxine.

It belongs to the transthyretin family. As to quaternary structure, homotetramer. Dimer of dimers. In the homotetramer, subunits assemble around a central channel that can accommodate two ligand molecules. Interacts with RBP4. In terms of processing, sulfonation of the reactive cysteine Cys-30 enhances the stability of the native conformation of TTR, avoiding misassembly of the protein leading to amyloid formation. Detected in liver.

It localises to the secreted. Thyroid hormone-binding protein. Probably transports thyroxine from the bloodstream to the brain. This is Transthyretin (TTR) from Pongo abelii (Sumatran orangutan).